We begin with the raw amino-acid sequence, 387 residues long: Eukaryotic translation initiation factor 3 subunit M (387 aa).

In terms of domain architecture, PCI spans 181-340 (LSSKVMIELL…QKVHISSTMH (160 aa)).

This sequence belongs to the eIF-3 subunit M family. As to quaternary structure, component of the eukaryotic translation initiation factor 3 (eIF-3) complex. The eIF-3 complex interacts with pix.

The protein localises to the cytoplasm. It localises to the golgi apparatus. Its function is as follows. Component of the eukaryotic translation initiation factor 3 (eIF-3) complex, which is involved in protein synthesis of a specialized repertoire of mRNAs and, together with other initiation factors, stimulates binding of mRNA and methionyl-tRNAi to the 40S ribosome. The eIF-3 complex specifically targets and initiates translation of a subset of mRNAs involved in cell proliferation. The chain is Eukaryotic translation initiation factor 3 subunit M from Drosophila sechellia (Fruit fly).